The chain runs to 424 residues: tRNA(Ile)-lysidine synthase (424 aa).

An ATP-binding site is contributed by 26–31; that stretch reads SGGIDS.

Belongs to the tRNA(Ile)-lysidine synthase family.

It localises to the cytoplasm. The enzyme catalyses cytidine(34) in tRNA(Ile2) + L-lysine + ATP = lysidine(34) in tRNA(Ile2) + AMP + diphosphate + H(+). Functionally, ligates lysine onto the cytidine present at position 34 of the AUA codon-specific tRNA(Ile) that contains the anticodon CAU, in an ATP-dependent manner. Cytidine is converted to lysidine, thus changing the amino acid specificity of the tRNA from methionine to isoleucine. This Streptococcus agalactiae serotype V (strain ATCC BAA-611 / 2603 V/R) protein is tRNA(Ile)-lysidine synthase.